The following is a 179-amino-acid chain: Transcription factor 21 (179 aa).

A disordered region spans residues 23-87; that stretch reads IKLDPNKEFG…QVQRNAANAR (65 aa). Residues 34 to 46 show a composition bias toward polar residues; sequence SNDSNEESSTCDN. The segment covering 50 to 64 has biased composition (basic residues); sequence KKGRGTSGKRRKAPS. Over residues 70–80 the composition is skewed to polar residues; sequence GNINQEGKQVQ. Residues 79–131 enclose the bHLH domain; sequence VQRNAANARERARMRVLSKAFSRLKTTLPWVPPDTKLSKLDTLRLASSYIAHL.

Efficient DNA binding requires dimerization with another bHLH protein.

The protein localises to the nucleus. Its function is as follows. Involved in epithelial-mesenchymal interactions in kidney and lung morphogenesis that include epithelial differentiation and branching morphogenesis. This chain is Transcription factor 21 (tcf21), found in Xenopus tropicalis (Western clawed frog).